A 398-amino-acid chain; its full sequence is cAMP-dependent protein kinase type 3 (398 aa).

Phosphoserine is present on residues S15 and S55. The region spanning 88–342 (FQILRTLGTG…SEDVKNHPWF (255 aa)) is the Protein kinase domain. Residues 94 to 102 (LGTGSFGRV) and K117 contribute to the ATP site. D211 acts as the Proton acceptor in catalysis. One can recognise an AGC-kinase C-terminal domain in the interval 343–398 (NEVIWEKLLARYIETPYEPPIQQGQGDTSQFDRYPEEEFNYGIQGEDPYMDLMKEF).

It belongs to the protein kinase superfamily. AGC Ser/Thr protein kinase family. cAMP subfamily.

The enzyme catalyses L-seryl-[protein] + ATP = O-phospho-L-seryl-[protein] + ADP + H(+). The catalysed reaction is L-threonyl-[protein] + ATP = O-phospho-L-threonyl-[protein] + ADP + H(+). Its activity is regulated as follows. Activated by cAMP. The protein is cAMP-dependent protein kinase type 3 (TPK3) of Saccharomyces cerevisiae (strain ATCC 204508 / S288c) (Baker's yeast).